We begin with the raw amino-acid sequence, 564 residues long: Proline--tRNA ligase (564 aa).

This sequence belongs to the class-II aminoacyl-tRNA synthetase family. ProS type 1 subfamily. As to quaternary structure, homodimer.

The protein resides in the cytoplasm. The catalysed reaction is tRNA(Pro) + L-proline + ATP = L-prolyl-tRNA(Pro) + AMP + diphosphate. Its function is as follows. Catalyzes the attachment of proline to tRNA(Pro) in a two-step reaction: proline is first activated by ATP to form Pro-AMP and then transferred to the acceptor end of tRNA(Pro). As ProRS can inadvertently accommodate and process non-cognate amino acids such as alanine and cysteine, to avoid such errors it has two additional distinct editing activities against alanine. One activity is designated as 'pretransfer' editing and involves the tRNA(Pro)-independent hydrolysis of activated Ala-AMP. The other activity is designated 'posttransfer' editing and involves deacylation of mischarged Ala-tRNA(Pro). The misacylated Cys-tRNA(Pro) is not edited by ProRS. The chain is Proline--tRNA ligase from Bacillus velezensis (strain DSM 23117 / BGSC 10A6 / LMG 26770 / FZB42) (Bacillus amyloliquefaciens subsp. plantarum).